The following is a 311-amino-acid chain: 4-hydroxy-tetrahydrodipicolinate synthase (311 aa).

Threonine 51 is a binding site for pyruvate. Tyrosine 140 acts as the Proton donor/acceptor in catalysis. Lysine 168 (schiff-base intermediate with substrate) is an active-site residue. Isoleucine 209 serves as a coordination point for pyruvate.

This sequence belongs to the DapA family. As to quaternary structure, homotetramer; dimer of dimers.

It localises to the cytoplasm. The catalysed reaction is L-aspartate 4-semialdehyde + pyruvate = (2S,4S)-4-hydroxy-2,3,4,5-tetrahydrodipicolinate + H2O + H(+). The protein operates within amino-acid biosynthesis; L-lysine biosynthesis via DAP pathway; (S)-tetrahydrodipicolinate from L-aspartate: step 3/4. Its function is as follows. Catalyzes the condensation of (S)-aspartate-beta-semialdehyde [(S)-ASA] and pyruvate to 4-hydroxy-tetrahydrodipicolinate (HTPA). This chain is 4-hydroxy-tetrahydrodipicolinate synthase, found in Streptococcus suis (strain 98HAH33).